The chain runs to 585 residues: Probable monoterpene synthase MTS1, chloroplastic (585 aa).

The disordered stretch occupies residues 1-29; it reads MSLSGVPLSAGLAPSPSNKPTNGKGQNIV. A chloroplast-targeting transit peptide spans 1-31; that stretch reads MSLSGVPLSAGLAPSPSNKPTNGKGQNIVRR. The segment covering 15 to 25 has biased composition (polar residues); the sequence is SPSNKPTNGKG. (2E)-geranyl diphosphate is bound by residues R298, D335, D339, R476, and D479. Residues D335 and D339 each coordinate Mg(2+). Residues 335-339 carry the DDXXD motif motif; that stretch reads DDIYD. Mg(2+)-binding residues include D479, T483, and E487.

The protein belongs to the terpene synthase family. Tpsb subfamily. Mg(2+) is required as a cofactor. The cofactor is Mn(2+). In terms of tissue distribution, expressed in trichomes. Detected in flowers, but not in leaves.

Its subcellular location is the plastid. The protein localises to the chloroplast. This is Probable monoterpene synthase MTS1, chloroplastic from Humulus lupulus (European hop).